The following is a 515-amino-acid chain: Maturase K (515 aa).

Belongs to the intron maturase 2 family. MatK subfamily.

The protein localises to the plastid. It localises to the chloroplast. Its function is as follows. Usually encoded in the trnK tRNA gene intron. Probably assists in splicing its own and other chloroplast group II introns. The chain is Maturase K from Ceratophyllum demersum (Rigid hornwort).